Consider the following 495-residue polypeptide: Probable cytosol aminopeptidase (495 aa).

Mn(2+)-binding residues include lysine 267 and aspartate 272. Residue lysine 279 is part of the active site. The Mn(2+) site is built by aspartate 290, aspartate 349, and glutamate 351. Residue arginine 353 is part of the active site.

The protein belongs to the peptidase M17 family. Requires Mn(2+) as cofactor.

The protein localises to the cytoplasm. The enzyme catalyses Release of an N-terminal amino acid, Xaa-|-Yaa-, in which Xaa is preferably Leu, but may be other amino acids including Pro although not Arg or Lys, and Yaa may be Pro. Amino acid amides and methyl esters are also readily hydrolyzed, but rates on arylamides are exceedingly low.. The catalysed reaction is Release of an N-terminal amino acid, preferentially leucine, but not glutamic or aspartic acids.. In terms of biological role, presumably involved in the processing and regular turnover of intracellular proteins. Catalyzes the removal of unsubstituted N-terminal amino acids from various peptides. The polypeptide is Probable cytosol aminopeptidase (Histophilus somni (strain 2336) (Haemophilus somnus)).